The following is an 881-amino-acid chain: Serine/threonine-protein kinase greatwall (881 aa).

A disordered region spans residues 1–20; that stretch reads MSTVEPLSDEGVAAGPRRIE. In terms of domain architecture, Protein kinase spans 30 to 837; that stretch reads FTIVKPISRG…LKELKHHPLF (808 aa). Residues 36–44 and Lys57 each bind ATP; that span reads ISRGAFGKV. Asp151 serves as the catalytic Proton acceptor. 2 disordered regions span residues 310 to 345 and 706 to 732; these read SPRL…VLNS and ITPL…RRGA. Residues 312 to 321 are compositionally biased toward basic and acidic residues; that stretch reads RLEKDVKQTE. Thr743 carries the post-translational modification Phosphothreonine; by CDK1. The region spanning 838 to 881 is the AGC-kinase C-terminal domain; the sequence is HGVDWDNLQNQPMPFIPQPDDETDTSYFEARNNAQHLTVSGFSL.

It belongs to the protein kinase superfamily. AGC Ser/Thr protein kinase family. Phosphorylation at Thr-743 by CDK1 during M phase activates its kinase activity. Maximum phosphorylation occurs in prometaphase.

It localises to the cytoplasm. Its subcellular location is the cytoskeleton. It is found in the microtubule organizing center. The protein resides in the centrosome. The protein localises to the nucleus. It carries out the reaction L-seryl-[protein] + ATP = O-phospho-L-seryl-[protein] + ADP + H(+). The enzyme catalyses L-threonyl-[protein] + ATP = O-phospho-L-threonyl-[protein] + ADP + H(+). Functionally, serine/threonine kinase that plays a key role in M phase by acting as a regulator of mitosis entry and maintenance. Acts by promoting the inactivation of protein phosphatase 2A (PP2A) during M phase: does not directly inhibit PP2A but acts by mediating phosphorylation and subsequent activation of ARPP19 and ENSA at 'Ser-62' and 'Ser-67', respectively. ARPP19 and ENSA are phosphatase inhibitors that specifically inhibit the PPP2R2D (PR55-delta) subunit of PP2A. Inactivation of PP2A during M phase is essential to keep cyclin-B1-CDK1 activity high. Following DNA damage, it is also involved in checkpoint recovery by being inhibited. The polypeptide is Serine/threonine-protein kinase greatwall (MASTL) (Gallus gallus (Chicken)).